The following is a 102-amino-acid chain: Co-chaperonin GroES (102 aa).

The protein belongs to the GroES chaperonin family. In terms of assembly, heptamer of 7 subunits arranged in a ring. Interacts with the chaperonin GroEL.

The protein localises to the cytoplasm. Together with the chaperonin GroEL, plays an essential role in assisting protein folding. The GroEL-GroES system forms a nano-cage that allows encapsulation of the non-native substrate proteins and provides a physical environment optimized to promote and accelerate protein folding. GroES binds to the apical surface of the GroEL ring, thereby capping the opening of the GroEL channel. The sequence is that of Co-chaperonin GroES from Chlamydia trachomatis serovar D (strain ATCC VR-885 / DSM 19411 / UW-3/Cx).